We begin with the raw amino-acid sequence, 217 residues long: Translation initiation factor IF-3 (217 aa).

Residues 170-217 (KKTEAMAEARQAQEARKADAKANPGKSQNAAETDDAEAEAPAEAPAEA) form a disordered region. Positions 172–189 (TEAMAEARQAQEARKADA) are enriched in basic and acidic residues.

It belongs to the IF-3 family. Monomer.

It is found in the cytoplasm. IF-3 binds to the 30S ribosomal subunit and shifts the equilibrium between 70S ribosomes and their 50S and 30S subunits in favor of the free subunits, thus enhancing the availability of 30S subunits on which protein synthesis initiation begins. The protein is Translation initiation factor IF-3 of Streptomyces coelicolor (strain ATCC BAA-471 / A3(2) / M145).